Consider the following 300-residue polypeptide: MSRTYKASGINLKTQVLGESDKIVTILTPEFGLIRAVAPGARKHNSSLGGRSGMFVVNELLIAKGRSLDKITQAQTLKTYPGLAKDLGKLAASQYLAEIVLSQALSEQPQEELYELFNEHLHRLEALSNANASGVLAHLAHGVFHLLALAGVTPQVQICCLSGRSLKPDFTEPNWQIGFSVPTGGTICLEAWKRLRTEGKGEINNQYPIPHIPLPMPHAQTVVVHRQEIPLISSRLGAMELALLQHLSQPEIMQIDGARDHNWLSVEQILRQYAQYQLGRPIRSATLIDSYFAANHDATI.

This sequence belongs to the RecO family.

In terms of biological role, involved in DNA repair and RecF pathway recombination. The chain is DNA repair protein RecO from Nostoc punctiforme (strain ATCC 29133 / PCC 73102).